The chain runs to 353 residues: Fasciculation and elongation protein zeta-2 (353 aa).

Residues 19-49 form a disordered region; that stretch reads SLLDQENCNASPEPGAEAGAEAGGGADGFPA. Residues 28–38 are compositionally biased toward low complexity; sequence ASPEPGAEAGA. A phosphoserine mark is found at serine 135, serine 176, and serine 195. Positions 214 to 286 form a coiled coil; it reads KRLSVSELNE…AKKKKKLKNG (73 aa). The tract at residues 271–300 is disordered; it reads KEHKETAKKKKKLKNGSSQNGKNERSHMPG.

The protein belongs to the zygin family. As to quaternary structure, homodimer; disulfide-linked. May form heterodimers with FEZ1. Interacts with synaptotagmin. Expressed in nonneural tissues, such as heart, lung, spleen, muscle, testis, placenta and melanocytes.

In terms of biological role, involved in axonal outgrowth and fasciculation. The chain is Fasciculation and elongation protein zeta-2 (FEZ2) from Homo sapiens (Human).